Here is a 309-residue protein sequence, read N- to C-terminus: Olfactory receptor 14A16 (309 aa).

Over 1-23 the chain is Extracellular; the sequence is MANLTIVTEFILMGFSTNKNMCI. N-linked (GlcNAc...) asparagine glycosylation occurs at Asn-3. The helical transmembrane segment at 24 to 44 threads the bilayer; the sequence is LHSILFLLIYLCALMGNVLII. Residues 45-52 lie on the Cytoplasmic side of the membrane; the sequence is MITTLDHH. A helical membrane pass occupies residues 53-73; it reads LHTPVYFFLKNLSFLDLCLIS. The Extracellular portion of the chain corresponds to 74–97; the sequence is VTAPKSIANSLIHNNSISFLGCVS. N-linked (GlcNAc...) asparagine glycosylation occurs at Asn-87. An intrachain disulfide couples Cys-95 to Cys-187. The helical transmembrane segment at 98-118 threads the bilayer; that stretch reads QVFLLLSSASAELLLLTVMSF. Residues 119–131 lie on the Cytoplasmic side of the membrane; the sequence is DRYTAICHPLHYD. Residues 132–152 form a helical membrane-spanning segment; the sequence is VIMDRSTCVQRATVSWLYGGL. The Extracellular segment spans residues 153–194; sequence IAVMHTAGTFSLSYCGSNMVHQFFCDIPQLLAISCSENLIRE. Residues 195–215 traverse the membrane as a helical segment; sequence IALILINVVLDFCCFIVIIIT. The Cytoplasmic portion of the chain corresponds to 216 to 235; it reads YVHVFSTVKKIPSTEGQSKA. Residues 236–255 form a helical membrane-spanning segment; it reads YSICLPHLLVVLFLSTGFIA. The Extracellular segment spans residues 256 to 268; sequence YLKPASESPSILD. Residues 269-289 form a helical membrane-spanning segment; it reads AVISVFYTMLPPTFNPIIYSL. The Cytoplasmic segment spans residues 290–309; the sequence is RNKAIKVALGMLIKGKLTKK.

Belongs to the G-protein coupled receptor 1 family.

The protein localises to the cell membrane. Its function is as follows. Odorant receptor. The sequence is that of Olfactory receptor 14A16 (OR14A16) from Homo sapiens (Human).